A 192-amino-acid polypeptide reads, in one-letter code: Anthranilate synthase component 2 (192 aa).

One can recognise a Glutamine amidotransferase type-1 domain in the interval 1-192; that stretch reads MIVLVNNRDS…KNFVEMSRNG (192 aa). 50 to 52 provides a ligand contact to L-glutamine; it reads GPG. The Nucleophile; for GATase activity role is filled by Cys-78. Residues Gln-82 and 127–128 contribute to the L-glutamine site; that span reads SL. Residues His-165 and Glu-167 each act as for GATase activity in the active site.

Heterotetramer consisting of two non-identical subunits: a beta subunit (TrpG) and a large alpha subunit (TrpE).

The enzyme catalyses chorismate + L-glutamine = anthranilate + pyruvate + L-glutamate + H(+). It participates in amino-acid biosynthesis; L-tryptophan biosynthesis; L-tryptophan from chorismate: step 1/5. Its function is as follows. Part of a heterotetrameric complex that catalyzes the two-step biosynthesis of anthranilate, an intermediate in the biosynthesis of L-tryptophan. In the first step, the glutamine-binding beta subunit (TrpG) of anthranilate synthase (AS) provides the glutamine amidotransferase activity which generates ammonia as a substrate that, along with chorismate, is used in the second step, catalyzed by the large alpha subunit of AS (TrpE) to produce anthranilate. In the absence of TrpG, TrpE can synthesize anthranilate directly from chorismate and high concentrations of ammonia. This chain is Anthranilate synthase component 2 (trpG), found in Thermococcus kodakarensis (strain ATCC BAA-918 / JCM 12380 / KOD1) (Pyrococcus kodakaraensis (strain KOD1)).